Here is a 264-residue protein sequence, read N- to C-terminus: Thymidylate synthase (264 aa).

Arginine 21 is a binding site for dUMP. Residue histidine 51 participates in (6R)-5,10-methylene-5,6,7,8-tetrahydrofolate binding. 126-127 lines the dUMP pocket; the sequence is RR. Cysteine 146 functions as the Nucleophile in the catalytic mechanism. DUMP is bound by residues 166 to 169, asparagine 177, and 207 to 209; these read RSCD and HLY. Aspartate 169 is a (6R)-5,10-methylene-5,6,7,8-tetrahydrofolate binding site. Alanine 263 serves as a coordination point for (6R)-5,10-methylene-5,6,7,8-tetrahydrofolate.

This sequence belongs to the thymidylate synthase family. Bacterial-type ThyA subfamily. As to quaternary structure, homodimer.

It is found in the cytoplasm. It catalyses the reaction dUMP + (6R)-5,10-methylene-5,6,7,8-tetrahydrofolate = 7,8-dihydrofolate + dTMP. It functions in the pathway pyrimidine metabolism; dTTP biosynthesis. Functionally, catalyzes the reductive methylation of 2'-deoxyuridine-5'-monophosphate (dUMP) to 2'-deoxythymidine-5'-monophosphate (dTMP) while utilizing 5,10-methylenetetrahydrofolate (mTHF) as the methyl donor and reductant in the reaction, yielding dihydrofolate (DHF) as a by-product. This enzymatic reaction provides an intracellular de novo source of dTMP, an essential precursor for DNA biosynthesis. The sequence is that of Thymidylate synthase from Salmonella typhi.